Reading from the N-terminus, the 119-residue chain is C-X-C motif chemokine 17 (119 aa).

An N-terminal signal peptide occupies residues 1-22; that stretch reads MKLLASPFLLLLPVMLMSMVFS. Positions 75 to 100 are disordered; it reads CPCDHVKGREKKNRHQKHHRKSQRPS. Intrachain disulfides connect Cys-75–Cys-103 and Cys-77–Cys-110. Positions 82 to 98 are enriched in basic residues; it reads GREKKNRHQKHHRKSQR.

It belongs to the intercrine alpha (chemokine CxC) family. Likely to undergo an endoproteolytic process to form a four-cysteine-containing mature peptide with a canonical CXC chemokine scaffold after secretion. In terms of tissue distribution, detected in lung, trachea, lung, tongue thyroid, submaxillary gland, epididymis, and uterus tissues and at a lower level in ovary, prostate and in intestinal tissues.

It localises to the secreted. Functionally, chemokine that acts as a chemoattractant for monocytes, macrophages and dendritic cells. Plays a role in angiogenesis and possibly in the development of tumors. Acts as an anti-inflammatory in the stomach. May play a role in the innate defense against infections. Activates the C-X-C chemokine receptor GPR35 to induce a rapid and transient rise in the level of intracellular calcium ions. This is C-X-C motif chemokine 17 (Cxcl17) from Mus musculus (Mouse).